Here is a 459-residue protein sequence, read N- to C-terminus: uncharacterized protein (459 aa).

The TRAM domain maps to 9-67 (KLEVGQTFPVTIKRLGINGEGVGYFKRQVVFIPGALPGEEVVAETTKIQRGFAEAKVKK). Residues Cys-80, Cys-86, Cys-89, and Cys-168 each contribute to the [4Fe-4S] cluster site. 4 residues coordinate S-adenosyl-L-methionine: Gln-292, Tyr-321, Asp-342, and Asp-390. Residue Cys-417 is the Nucleophile of the active site.

It belongs to the class I-like SAM-binding methyltransferase superfamily. RNA M5U methyltransferase family.

This is an uncharacterized protein from Bacillus anthracis.